The primary structure comprises 185 residues: Keratin-associated protein 4-8 (185 aa).

25 repeat units span residues 14-18, 19-23, 24-28, 39-43, 44-48, 49-53, 54-58, 59-63, 64-68, 69-73, 74-78, 79-83, 84-88, 89-93, 94-98, 99-103, 104-108, 109-113, 114-118, 119-123, 124-128, 134-138, 139-143, 144-148, and 149-164. The 25 X 5 AA repeats of C-C-[IKRQVHEC]-[SPRT]-[STCVQPR] stretch occupies residues 14–164; sequence GCGQDLCQET…CGRVSCHTTC (151 aa).

It belongs to the KRTAP type 4 family. As to quaternary structure, interacts with hair keratins. As to expression, expressed in the hair follicles.

Its function is as follows. In the hair cortex, hair keratin intermediate filaments are embedded in an interfilamentous matrix, consisting of hair keratin-associated proteins (KRTAP), which are essential for the formation of a rigid and resistant hair shaft through their extensive disulfide bond cross-linking with abundant cysteine residues of hair keratins. The matrix proteins include the high-sulfur and high-glycine-tyrosine keratins. The chain is Keratin-associated protein 4-8 (KRTAP4-8) from Homo sapiens (Human).